Here is a 226-residue protein sequence, read N- to C-terminus: 7-cyano-7-deazaguanine synthase (226 aa).

Residue 9 to 19 participates in ATP binding; sequence LSGGLDSATVL. Positions 189, 199, 202, and 205 each coordinate Zn(2+).

It belongs to the QueC family. The cofactor is Zn(2+).

The enzyme catalyses 7-carboxy-7-deazaguanine + NH4(+) + ATP = 7-cyano-7-deazaguanine + ADP + phosphate + H2O + H(+). Its pathway is purine metabolism; 7-cyano-7-deazaguanine biosynthesis. Functionally, catalyzes the ATP-dependent conversion of 7-carboxy-7-deazaguanine (CDG) to 7-cyano-7-deazaguanine (preQ(0)). The polypeptide is 7-cyano-7-deazaguanine synthase (Cupriavidus pinatubonensis (strain JMP 134 / LMG 1197) (Cupriavidus necator (strain JMP 134))).